A 340-amino-acid chain; its full sequence is MAVQMEYEKDVKVAALDGKKIAVIGYGSQGHAHAQNLRDTGHDVIIGVRPGKSFDKAKEDGFDTYTVAEAAKLADVIMILAPDEIQQELYEAEIAPNLEAGNAVGFAHGFNIHFEFIKVPADVDVFMCAPKGPGHLVRRTFEEGFGVPALYAVYQDATGNAKNIAMDWCKGVGAARVGLLETTYKEETEEDLFGEQAVLCGGLTALIEAGFEVLTEAGYAPELAYFEVLHEMKLIVDLIYEGGFKKMRQSISNTAEYGDYVSGPRVITEQVKENMKAVLADIQNGKFANDFVNDYKAGRPKLTAYREQAANLEIEKVGAELRKAMPFVGKNDDDAFKIYN.

The region spanning 3-182 (VQMEYEKDVK…GAARVGLLET (180 aa)) is the KARI N-terminal Rossmann domain. NADP(+) is bound by residues 26-29 (YGSQ), arginine 49, serine 53, and 83-86 (DEIQ). Histidine 108 is an active-site residue. Glycine 134 is an NADP(+) binding site. The KARI C-terminal knotted domain occupies 183–328 (TYKEETEEDL…AELRKAMPFV (146 aa)). Aspartate 191, glutamate 195, glutamate 227, and glutamate 231 together coordinate Mg(2+). Serine 252 is a binding site for substrate.

This sequence belongs to the ketol-acid reductoisomerase family. Mg(2+) is required as a cofactor.

It carries out the reaction (2R)-2,3-dihydroxy-3-methylbutanoate + NADP(+) = (2S)-2-acetolactate + NADPH + H(+). It catalyses the reaction (2R,3R)-2,3-dihydroxy-3-methylpentanoate + NADP(+) = (S)-2-ethyl-2-hydroxy-3-oxobutanoate + NADPH + H(+). It functions in the pathway amino-acid biosynthesis; L-isoleucine biosynthesis; L-isoleucine from 2-oxobutanoate: step 2/4. It participates in amino-acid biosynthesis; L-valine biosynthesis; L-valine from pyruvate: step 2/4. Involved in the biosynthesis of branched-chain amino acids (BCAA). Catalyzes an alkyl-migration followed by a ketol-acid reduction of (S)-2-acetolactate (S2AL) to yield (R)-2,3-dihydroxy-isovalerate. In the isomerase reaction, S2AL is rearranged via a Mg-dependent methyl migration to produce 3-hydroxy-3-methyl-2-ketobutyrate (HMKB). In the reductase reaction, this 2-ketoacid undergoes a metal-dependent reduction by NADPH to yield (R)-2,3-dihydroxy-isovalerate. This Streptococcus gordonii (strain Challis / ATCC 35105 / BCRC 15272 / CH1 / DL1 / V288) protein is Ketol-acid reductoisomerase (NADP(+)).